Reading from the N-terminus, the 115-residue chain is Large ribosomal subunit protein bL35m (115 aa).

The protein belongs to the bacterial ribosomal protein bL35 family.

Its subcellular location is the mitochondrion. This is Large ribosomal subunit protein bL35m from Saccharomyces cerevisiae (strain YJM789) (Baker's yeast).